The chain runs to 432 residues: Methylenetetrahydrofolate--tRNA-(uracil-5-)-methyltransferase TrmFO (432 aa).

7 to 12 contacts FAD; sequence GAGLAG.

This sequence belongs to the MnmG family. TrmFO subfamily. Requires FAD as cofactor.

The protein resides in the cytoplasm. The enzyme catalyses uridine(54) in tRNA + (6R)-5,10-methylene-5,6,7,8-tetrahydrofolate + NADH + H(+) = 5-methyluridine(54) in tRNA + (6S)-5,6,7,8-tetrahydrofolate + NAD(+). It carries out the reaction uridine(54) in tRNA + (6R)-5,10-methylene-5,6,7,8-tetrahydrofolate + NADPH + H(+) = 5-methyluridine(54) in tRNA + (6S)-5,6,7,8-tetrahydrofolate + NADP(+). Functionally, catalyzes the folate-dependent formation of 5-methyl-uridine at position 54 (M-5-U54) in all tRNAs. This Anoxybacillus flavithermus (strain DSM 21510 / WK1) protein is Methylenetetrahydrofolate--tRNA-(uracil-5-)-methyltransferase TrmFO.